Here is a 1442-residue protein sequence, read N- to C-terminus: Clustered mitochondria protein homolog (1442 aa).

2 disordered regions span residues 38 to 100 (NYRN…KKPD) and 237 to 258 (GRSE…KDRP). A compositionally biased stretch (basic and acidic residues) spans 82-100 (SEGEQQKDKTAAEDKKKPD). In terms of domain architecture, Clu spans 394–636 (RAEDTFSSKL…RTFPPDVNFL (243 aa)). 2 stretches are compositionally biased toward basic and acidic residues: residues 696–714 (QKQE…EPKA) and 737–763 (ESKE…KVET). Disordered stretches follow at residues 696–763 (QKQE…KVET) and 949–984 (SESD…SFQC). Polar residues predominate over residues 949 to 958 (SESDALTKSG). TPR repeat units lie at residues 1087–1120 (AYNF…LNNV), 1213–1246 (ALLD…NIKY), and 1248–1281 (GEKS…EKET). The interval 1373-1442 (RQKEGGTSEQ…SSNASAQQVS (70 aa)) is disordered. Residues 1380 to 1390 (SEQAAAAQASQ) show a composition bias toward low complexity. Residues 1424–1442 (ASSSKQADNSSNASAQQVS) are compositionally biased toward polar residues.

This sequence belongs to the CLU family.

Its subcellular location is the cytoplasm. Functionally, mRNA-binding protein involved in proper cytoplasmic distribution of mitochondria. The polypeptide is Clustered mitochondria protein homolog (Aedes aegypti (Yellowfever mosquito)).